We begin with the raw amino-acid sequence, 730 residues long: Kinesin-like protein KIF2C (730 aa).

Residues 1–256 (MERLVATRLV…MDCHRISMAD (256 aa)) form a globular region. Residues 79–98 (NMPPQRNVSSQNHKRKTISK) are disordered. The negative regulator of microtubule-binding stretch occupies residues 211-242 (EQRAQNYERRMKRAQDYDTSVPNWEFGKMIKE). In terms of domain architecture, Kinesin motor spans 262 to 592 (RICVCVRKRP…LRYADRVKEL (331 aa)). ATP is bound by residues Arg-268 and 352-359 (GQTGSGKT). A coiled-coil region spans residues 599-730 (TNDDNLQMED…QISKKKRSNK (132 aa)).

This sequence belongs to the TRAFAC class myosin-kinesin ATPase superfamily. Kinesin family. MCAK/KIF2 subfamily.

Its subcellular location is the cytoplasm. The protein localises to the cytoskeleton. It localises to the nucleus. The protein resides in the chromosome. It is found in the centromere. Its subcellular location is the kinetochore. In terms of biological role, promotes ATP-dependent removal of tubulin dimers from microtubules. Regulates the turnover of microtubules at the kinetochore and functions in chromosome segregation during mitosis. May play a role in chromosome congression and may be required for the lateral to end-on conversion of the chromosome-microtubule attachment. In Xenopus laevis (African clawed frog), this protein is Kinesin-like protein KIF2C (kif2c).